The sequence spans 76 residues: MAYIYALIFAIVVCMNTDVIQAEESQHDTLENVEYRLSCIPKGGECERMADPCCPGLQCLGGNPFNKENFGKCKCQ.

The N-terminal stretch at 1-22 (MAYIYALIFAIVVCMNTDVIQA) is a signal peptide.

Belongs to the scoloptoxin-13 family. Contains 3 disulfide bonds. In terms of tissue distribution, expressed by the venom gland.

It localises to the secreted. Its function is as follows. Inhibits voltage-gated calcium channel (Cav) currents. This Scolopendra mutilans (Chinese red-headed centipede) protein is Omega-scoloptoxin(13)-Ssm2b.